Reading from the N-terminus, the 146-residue chain is Large ribosomal subunit protein uL11 (146 aa).

This sequence belongs to the universal ribosomal protein uL11 family. Part of the ribosomal stalk of the 50S ribosomal subunit. Interacts with L10 and the large rRNA to form the base of the stalk. L10 forms an elongated spine to which L12 dimers bind in a sequential fashion forming a multimeric L10(L12)X complex. In terms of processing, one or more lysine residues are methylated.

Functionally, forms part of the ribosomal stalk which helps the ribosome interact with GTP-bound translation factors. In Treponema pallidum subsp. pallidum (strain SS14), this protein is Large ribosomal subunit protein uL11.